A 349-amino-acid chain; its full sequence is Desmethyl-yatein O-methyltransferase (349 aa).

Residues glycine 193, aspartate 216, aspartate 236, methionine 237, methionine 249, and lysine 250 each contribute to the S-adenosyl-L-homocysteine site. Histidine 254 acts as the Proton acceptor in catalysis. Active-site residues include glutamate 282 and glutamate 314.

This sequence belongs to the class I-like SAM-binding methyltransferase superfamily. Cation-independent O-methyltransferase family. COMT subfamily. As to quaternary structure, homodimer. As to expression, mostly expressed in stems, and, to a lower extent, in leaves.

The enzyme catalyses (-)-5'-demethylyatein + S-adenosyl-L-methionine = (-)-yatein + S-adenosyl-L-homocysteine + H(+). The protein operates within aromatic compound metabolism; phenylpropanoid biosynthesis. In terms of biological role, O-methyltransferase involved in the biosynthesis of etoposide, a chemotherapeutic compound of the topoisomerase inhibitor family. Catalyzes the methylation of (-)-5'-demethylyatein to produce (-)-yatein. This chain is Desmethyl-yatein O-methyltransferase, found in Sinopodophyllum hexandrum (Himalayan may apple).